A 183-amino-acid chain; its full sequence is Capsid protein (183 aa).

A disordered region spans residues 136-183 (NAPILSTLPETTVVRRRGRSPRRRTPSPRRRRSQSPRRRRSQSRESQC). Positions 149–176 (VRRRGRSPRRRTPSPRRRRSQSPRRRRS) are enriched in basic residues. Phosphoserine; by host occurs at positions 155, 162, and 170. The 1; half-length repeat unit spans residues 155-161 (SPRRRTP). The tract at residues 155–177 (SPRRRTPSPRRRRSQSPRRRRSQ) is 3 X 8 AA repeats of S-P-R-R-R-[PR]-S-Q. The Bipartite nuclear localization signal motif lies at 158-175 (RRTPSPRRRRSQSPRRRR). Repeat copies occupy residues 162–169 (SPRRRRSQ) and 170–177 (SPRRRRSQ). The segment at 177 to 183 (QSRESQC) is RNA binding.

Belongs to the orthohepadnavirus core antigen family. In terms of assembly, homodimerizes, then multimerizes. Interacts with cytosol exposed regions of viral L glycoprotein present in the reticulum-to-Golgi compartment. Interacts with human FLNB. Phosphorylated form interacts with host importin alpha; this interaction depends on the exposure of the NLS, which itself depends upon genome maturation and/or phosphorylation of the capsid protein. Interacts with host NUP153. Phosphorylated by host SRPK1, SRPK2, and maybe protein kinase C or GAPDH. Phosphorylation is critical for pregenomic RNA packaging. Protein kinase C phosphorylation is stimulated by HBx protein and may play a role in transport of the viral genome to the nucleus at the late step during the viral replication cycle.

Its subcellular location is the virion. The protein localises to the host cytoplasm. Self assembles to form an icosahedral capsid. Most capsids appear to be large particles with an icosahedral symmetry of T=4 and consist of 240 copies of capsid protein, though a fraction forms smaller T=3 particles consisting of 180 capsid proteins. Entering capsids are transported along microtubules to the nucleus. Phosphorylation of the capsid is thought to induce exposure of nuclear localization signal in the C-terminal portion of the capsid protein that allows binding to the nuclear pore complex via the importin (karyopherin-) alpha and beta. Capsids are imported in intact form through the nuclear pore into the nuclear basket, where it probably binds NUP153. Only capsids that contain the mature viral genome can release the viral DNA and capsid protein into the nucleoplasm. Immature capsids get stuck in the basket. Capsids encapsulate the pre-genomic RNA and the P protein. Pre-genomic RNA is reverse-transcribed into DNA while the capsid is still in the cytoplasm. The capsid can then either be directed to the nucleus, providing more genomes for transcription, or bud through the endoplasmic reticulum to provide new virions. The chain is Capsid protein from Hepatitis B virus genotype B2 (isolate Indonesia/pIDW420/1988) (HBV-B).